Reading from the N-terminus, the 59-residue chain is Large ribosomal subunit protein bL32 (59 aa).

Residues 1-59 (MAVQQNKKSPSKRGMHRSHDALTAPALSVDSTTGEVHRPHHISPNGMYRGRKVVKAKGE) are disordered. Positions 49 to 59 (RGRKVVKAKGE) are enriched in basic residues.

This sequence belongs to the bacterial ribosomal protein bL32 family.

This chain is Large ribosomal subunit protein bL32 (rpmF), found in Neisseria meningitidis serogroup B (strain ATCC BAA-335 / MC58).